Reading from the N-terminus, the 327-residue chain is Lipoyl synthase (327 aa).

Positions 66, 71, 77, 92, 96, 99, and 306 each coordinate [4Fe-4S] cluster. Positions 78-295 constitute a Radical SAM core domain; sequence FSKGTATFMI…EKEAYELGFT (218 aa).

Belongs to the radical SAM superfamily. Lipoyl synthase family. [4Fe-4S] cluster is required as a cofactor.

The protein localises to the cytoplasm. The catalysed reaction is [[Fe-S] cluster scaffold protein carrying a second [4Fe-4S](2+) cluster] + N(6)-octanoyl-L-lysyl-[protein] + 2 oxidized [2Fe-2S]-[ferredoxin] + 2 S-adenosyl-L-methionine + 4 H(+) = [[Fe-S] cluster scaffold protein] + N(6)-[(R)-dihydrolipoyl]-L-lysyl-[protein] + 4 Fe(3+) + 2 hydrogen sulfide + 2 5'-deoxyadenosine + 2 L-methionine + 2 reduced [2Fe-2S]-[ferredoxin]. It participates in protein modification; protein lipoylation via endogenous pathway; protein N(6)-(lipoyl)lysine from octanoyl-[acyl-carrier-protein]: step 2/2. In terms of biological role, catalyzes the radical-mediated insertion of two sulfur atoms into the C-6 and C-8 positions of the octanoyl moiety bound to the lipoyl domains of lipoate-dependent enzymes, thereby converting the octanoylated domains into lipoylated derivatives. This chain is Lipoyl synthase, found in Neisseria gonorrhoeae (strain ATCC 700825 / FA 1090).